A 271-amino-acid polypeptide reads, in one-letter code: Oxamate carbamoyltransferase subunit AllH (271 aa).

The protein belongs to the AllH family. As to quaternary structure, the OXTCase is composed of 3 subunits, AllF, AllG and AllH. It depends on Mg(2+) as a cofactor.

It catalyses the reaction oxamate + carbamoyl phosphate = N-carbamoyl-2-oxoglycine + phosphate. Its pathway is nitrogen metabolism; (S)-allantoin degradation. Its function is as follows. Component of a carbamoyltransferase involved in the anaerobic nitrogen utilization via the assimilation of allantoin. Catalyzes the conversion of oxalurate (N-carbamoyl-2-oxoglycine) to oxamate and carbamoyl phosphate. The sequence is that of Oxamate carbamoyltransferase subunit AllH from Escherichia coli O157:H7.